The primary structure comprises 119 residues: Nucleoid-associated protein Cphy_0047 (119 aa).

The interval 23–45 (AQRMQKQMEDKTKEMEEKQWEAT) is disordered. A compositionally biased stretch (basic and acidic residues) spans 28-42 (KQMEDKTKEMEEKQW).

The protein belongs to the YbaB/EbfC family. As to quaternary structure, homodimer.

Its subcellular location is the cytoplasm. The protein resides in the nucleoid. Functionally, binds to DNA and alters its conformation. May be involved in regulation of gene expression, nucleoid organization and DNA protection. The polypeptide is Nucleoid-associated protein Cphy_0047 (Lachnoclostridium phytofermentans (strain ATCC 700394 / DSM 18823 / ISDg) (Clostridium phytofermentans)).